A 190-amino-acid chain; its full sequence is ATP synthase subunit C lysine N-methyltransferase (190 aa).

The protein belongs to the ANT/ATPSC lysine N-methyltransferase family.

The protein localises to the mitochondrion. It carries out the reaction L-lysyl-[protein] + 3 S-adenosyl-L-methionine = N(6),N(6),N(6)-trimethyl-L-lysyl-[protein] + 3 S-adenosyl-L-homocysteine + 3 H(+). In terms of biological role, mitochondrial protein-lysine N-methyltransferase that trimethylates ATP synthase subunit C. Trimethylation is required for proper incorporation of the C subunit into the ATP synthase complex and mitochondrial respiration. The polypeptide is ATP synthase subunit C lysine N-methyltransferase (Caenorhabditis elegans).